A 341-amino-acid chain; its full sequence is Protein BEARSKIN2 (341 aa).

One can recognise an NAC domain in the interval 9–160; sequence VPPGFRFHPT…GWVVCRVFMK (152 aa). The DNA-binding element occupies 109-166; sequence IGMRKTLVFYKGRAPHGQKTDWIMHEYRLEDADDPQANPSEDGWVVCRVFMKKNLFKV.

Expressed throughout the root cap, in both columella (COL) and lateral root cap (LRC) cells, with higher levels in the COL-adjoining LRC than the upper LRC. Also present at low levels expression in the tips of cotyledons and the cotyledon vasculature, as weel as in vasculature of the first pair of true leaves and at the hydathodes.

It localises to the nucleus. Transcription activator. Together with BRN1 and SMB, regulates cellular maturation of root cap. Promotes the expression of genes involved in secondary cell walls (SCW) biosynthesis. This chain is Protein BEARSKIN2 (BRN2), found in Arabidopsis thaliana (Mouse-ear cress).